Here is a 69-residue protein sequence, read N- to C-terminus: MTVPKKRLSSSKKRIRKNIWKGKGHWAALKALSLGKSLSTGNSKSFFRFFSMPTRFFSMPTDNKKTKKS.

It belongs to the bacterial ribosomal protein bL32 family.

Its subcellular location is the plastid. The protein resides in the chloroplast. The protein is Large ribosomal subunit protein bL32c of Pelargonium hortorum (Common geranium).